We begin with the raw amino-acid sequence, 446 residues long: Hepatocyte nuclear factor 4-beta (446 aa).

Residues 47–122 (NSFCAICGDR…AGMKKEAVQN (76 aa)) constitute a DNA-binding region (nuclear receptor). 2 NR C4-type zinc fingers span residues 50–70 (CAICGDRATGKHYGASSCDGC) and 86–110 (CRFSRQCIVDKDKRNQCRYCRLRKC). The region spanning 137–366 (NGSLSINVLT…SLLQELLLGG (230 aa)) is the NR LBD domain.

Belongs to the nuclear hormone receptor family. NR2 subfamily. In terms of assembly, homodimerization is required for HNF4-alpha to bind to its recognition site. As to expression, expressed in liver, kidney, stomach, intestine, lung, ovary, and testis. Not expressed in fat, muscle and brain.

The protein resides in the nucleus. Transcription factor; binds and activates the promoter for the HNF1-alpha gene. Seems to have a lower DNA binding activity than HNF4-alpha and is a weaker transactivator than the alpha isoform. The polypeptide is Hepatocyte nuclear factor 4-beta (hnf4b) (Xenopus laevis (African clawed frog)).